A 444-amino-acid polypeptide reads, in one-letter code: Elongation factor 1-alpha (444 aa).

The tr-type G domain occupies 15–236; the sequence is KPHLNLAVIG…ALDTFQPPPR (222 aa). Positions 24-31 are G1; that stretch reads GHVDNGKS. Residue 24–31 participates in GTP binding; sequence GHVDNGKS. Residue S31 participates in Mg(2+) binding. Residues 80–84 form a G2 region; the sequence is GVTIE. The interval 101-104 is G3; sequence DLPG. GTP-binding positions include 101–105 and 163–166; these read DLPGH and NKMD. The interval 163-166 is G4; the sequence is NKMD. The G5 stretch occupies residues 202–204; the sequence is SAI.

The protein belongs to the TRAFAC class translation factor GTPase superfamily. Classic translation factor GTPase family. EF-Tu/EF-1A subfamily.

It is found in the cytoplasm. It catalyses the reaction GTP + H2O = GDP + phosphate + H(+). GTP hydrolase that promotes the GTP-dependent binding of aminoacyl-tRNA to the A-site of ribosomes during protein biosynthesis. This chain is Elongation factor 1-alpha, found in Pyrobaculum islandicum (strain DSM 4184 / JCM 9189 / GEO3).